The following is a 234-amino-acid chain: Immune-associated nucleotide-binding protein 2 (234 aa).

The 203-residue stretch at 21–223 (KPVKNIVLVG…YTEDMYRNIK (203 aa)) folds into the AIG1-type G domain. GTP contacts are provided by residues 30 to 38 (GRSVNGICT), Ser-51, and Asn-183.

It belongs to the TRAFAC class TrmE-Era-EngA-EngB-Septin-like GTPase superfamily. AIG1/Toc34/Toc159-like paraseptin GTPase family. IAN subfamily. As to expression, mostly expressed in pollen. Also detected in lateral roots and radicles.

The polypeptide is Immune-associated nucleotide-binding protein 2 (Arabidopsis thaliana (Mouse-ear cress)).